A 717-amino-acid polypeptide reads, in one-letter code: MNKRFFPTLLLAFVCSTLAYADGGMWLMQQINGQVARMKSLGMQLEAADIYNPNGSSLKDAVVMFDGGCTGVLVSNQGLLLTNHHCGYDQIQKHSSVQHNYLKDGFWSYSLAEELVNPGLEVEIVDEITDVTAAVKKELERIKKPSGLEFLSPRYLSSLAPEIVGKKAASRPGYRYEIKAFYGGNRYYMFTKKVFRDVRLVAAPPSSIGKFGSDTDNWAWPRHTGDFSIFRLYADKNGNPAEYSKDNVPYRPKRWVKVNAQGVKEGDFALIMGYPGTTYKFFTADEVTEWSEIDNNIRIEMRGILQDVMLREMLADPKINIMYAAKYASSQNGYKRAQGANWAIRRRSLREIKLAQQQEVLAWAKQKGIATTEEAVRAISKAIEGRQDLRMRQRYLLEGILMGIEMSNAPAADSDIADHWDDPARREAGLQSIRKQFEAFFNKDYSPEVEKDQLAIALLTRYAERIPAEKQPISIREGIAEYGSAKAYVEMIFDKSIYASRERFEEFMKNPDRDRLLRDPMSRFAASVAYEHQKLAKEVAAFDAPLAAAQRSYVASVLDMKGQPNLAPDANLTLRFTYGEIKGYQPRDVVTYGAKSTLEGVMEKEDPNNWEYVVDPKLKALYEAKNYGRYANSDGSMPVNFCATTHTTGGNSGSPVMNARGELIGLNFDRNWEGVGGDIEYLPNYQRSIILDIRYLLFIIDKFAGCQRLIDEIQPQF.

A signal peptide spans 1 to 21 (MNKRFFPTLLLAFVCSTLAYA). Residues His85, Asp226, and Ser652 each act as charge relay system in the active site.

Belongs to the peptidase S46 family.

It localises to the secreted. Its subcellular location is the cell surface. Enzyme activity is completely blocked by diisopropyl-fluorophosphates, moderately by phenylmethylsulfonyl fluoride (PMSF) and 4-(2-methyl)benzenesulfonyl fluoride, and slightly by pepstatin in vitro. In terms of biological role, catalyzes the removal of dipeptides from the N-terminus of oligopeptides. Shows a strict specificity for acidic residues (Asp or Glu) in the P1 position, and has a hydrophobic residue preference at the P2 position. Is likely involved in amino acid metabolism and bacterial growth/survival of asaccharolytic P.endodontalis, that utilizes amino acids from extracellular proteinaceous nutrients as energy and carbon sources. The chain is Asp/Glu-specific dipeptidyl-peptidase (dpp11) from Porphyromonas endodontalis (strain ATCC 35406 / DSM 24491 / JCM 8526 / CCUG 16442 / BCRC 14492 / NCTC 13058 / HG 370) (Bacteroides endodontalis).